A 257-amino-acid chain; its full sequence is Ribosomal RNA small subunit methyltransferase A (257 aa).

Residues Asn12, Leu14, Gly39, Glu60, Asp85, and Asn105 each coordinate S-adenosyl-L-methionine.

This sequence belongs to the class I-like SAM-binding methyltransferase superfamily. rRNA adenine N(6)-methyltransferase family. RsmA subfamily.

It localises to the cytoplasm. It carries out the reaction adenosine(1518)/adenosine(1519) in 16S rRNA + 4 S-adenosyl-L-methionine = N(6)-dimethyladenosine(1518)/N(6)-dimethyladenosine(1519) in 16S rRNA + 4 S-adenosyl-L-homocysteine + 4 H(+). In terms of biological role, specifically dimethylates two adjacent adenosines (A1518 and A1519) in the loop of a conserved hairpin near the 3'-end of 16S rRNA in the 30S particle. May play a critical role in biogenesis of 30S subunits. The protein is Ribosomal RNA small subunit methyltransferase A of Methylococcus capsulatus (strain ATCC 33009 / NCIMB 11132 / Bath).